The sequence spans 217 residues: Peptide methionine sulfoxide reductase MsrA (217 aa).

Residue Cys-54 is part of the active site.

This sequence belongs to the MsrA Met sulfoxide reductase family.

The catalysed reaction is L-methionyl-[protein] + [thioredoxin]-disulfide + H2O = L-methionyl-(S)-S-oxide-[protein] + [thioredoxin]-dithiol. It carries out the reaction [thioredoxin]-disulfide + L-methionine + H2O = L-methionine (S)-S-oxide + [thioredoxin]-dithiol. In terms of biological role, has an important function as a repair enzyme for proteins that have been inactivated by oxidation. Catalyzes the reversible oxidation-reduction of methionine sulfoxide in proteins to methionine. The sequence is that of Peptide methionine sulfoxide reductase MsrA from Maricaulis maris (strain MCS10) (Caulobacter maris).